We begin with the raw amino-acid sequence, 97 residues long: uncharacterized protein (97 aa).

This is an uncharacterized protein from Escherichia coli (Bacteriophage T4).